Here is a 395-residue protein sequence, read N- to C-terminus: 8-amino-3,8-dideoxy-alpha-D-manno-octulosonate transaminase (395 aa).

The residue at position 186 (lysine 186) is an N6-(pyridoxal phosphate)lysine.

The protein belongs to the DegT/DnrJ/EryC1 family. Pyridoxal 5'-phosphate serves as cofactor.

The catalysed reaction is 8-amino-3,8-dideoxy-alpha-D-manno-octulosonate + 2-oxoglutarate = 3,8-dideoxy-8-oxo-alpha-D-manno-octulosonate + L-glutamate. The protein operates within bacterial outer membrane biogenesis; lipopolysaccharide biosynthesis. Catalyzes the second (last) step of the biosynthesis of Kdo8N (8-amino-3,8-dideoxy-D-manno-octulosonate) from Kdo (3-deoxy-D-manno-octulosonate). The polypeptide is 8-amino-3,8-dideoxy-alpha-D-manno-octulosonate transaminase (Shewanella oneidensis (strain ATCC 700550 / JCM 31522 / CIP 106686 / LMG 19005 / NCIMB 14063 / MR-1)).